A 1052-amino-acid chain; its full sequence is MRENVKRVLVIGSGPIKIAEAAEFDYSGSQALKALKEEGIETILVNSNVATVQTSRKFADKLYMIPVTWWTVERVIEKERPDAIMIGFGGQTALNVGVDLYKKEILKKYGVKVLGTPIEGIERALSREKFRETMINVNLPVPPSLSARSEEEALEKARQIGYPVMVRVSFNLGGRGSTVAWSEEDLKRDIGRALSQSYIHEVLIEKYLHHWIELEYEVMRDKHGNSAVIACIENLDPMGVHTGESTVIAPCQTLDNKEFQDMRSMSIDVAKSIDLVGECNVQFALNPLAYEYYIIETNPRMSRSSALASKATGYPLAYVSAKLALGYELYEVLNKVSGSTCACFEPSLDYVVIKIPRWDLDKFENVEHSLATEMKSVGEVMSIGRSFEEALQKAVRMLDLGEPGIIGGKVYNSKMTKIDSLRMLKERRPYWFLYASKAFKEGATIDEVYEVTGINKFFLNKIKNLVDFYESIKNNKGLDQKTLSIAKRLGFSDYQIASAVGLSEKDIRELRQKYGIEPKVKQIDTLAGEWPAVTNYLYVTYNGTEDDIEFSNGIRKLLIVGAGGFRIGVSVEFDWGVVSLLDSASKYFDEVTIINYNPETVSTDWDIARKLYFDEISVERILDLVRKEKFNYVATFAGGQIGNTISKKLEENGVKLLGTSGHSVDIAEDREKFSRLLDKLGIKQPDWISARSIEEVRKFVEMVGYPVLVRPSYVLSGSAMRIVYNDTELVSYIKKATEISSEHPVVVSKYIDNAIEAEIDGASDGRGVYGVVLEHVEEAGVHSGDATISIPFKKLSPETVHKMKESIHSISRELNIKGPFNVQFVVKNGTPYIIEMNLRASRSMPFSSKVVGKNIIDLALTGVIKGFDFDEFVELKAKSWGVKSAQFSWAQLKGAYPFLGPEMRSTGEAASLGVDFYDALLKSWLSSSPNRLPDQKGIALVYGRSNVEYLQASARNLSEYGMTVYTLSDAPIYGYEVTSSGKSVELIKDRKVEIVVTDGYLKSLDYEVRRIAVDYNVPIILNGRLGEELTKAFLLRKSNMTFYEIGEYGAGI.

Residues 1–399 form a carboxyphosphate synthetic domain region; sequence MRENVKRVLV…ALQKAVRMLD (399 aa). Residues Arg127, Arg167, Gly173, Gly174, Lys206, Leu208, Glu213, Gly239, Val240, His241, Gln282, and Glu296 each contribute to the ATP site. The ATP-grasp 1 domain occupies 131-325; that stretch reads RETMINVNLP…LAYVSAKLAL (195 aa). 3 residues coordinate Mg(2+): Gln282, Glu296, and Asn298. Gln282, Glu296, and Asn298 together coordinate Mn(2+). Residues 400–548 form an oligomerization domain region; the sequence is LGEPGIIGGK…VTYNGTEDDI (149 aa). The segment at 549-930 is carbamoyl phosphate synthetic domain; sequence EFSNGIRKLL…LKSWLSSSPN (382 aa). Residues 674-864 enclose the ATP-grasp 2 domain; sequence SRLLDKLGIK…IIDLALTGVI (191 aa). ATP contacts are provided by Arg710, Lys749, Ile751, Glu756, Gly780, Val781, His782, Ser783, Gln823, and Glu835. Mg(2+) is bound by residues Gln823, Glu835, and Asn837. Positions 823, 835, and 837 each coordinate Mn(2+). Residues 930–1052 enclose the MGS-like domain; it reads NRLPDQKGIA…YEIGEYGAGI (123 aa). An allosteric domain region spans residues 931–1052; that stretch reads RLPDQKGIAL…YEIGEYGAGI (122 aa).

The protein belongs to the CarB family. Composed of two chains; the small (or glutamine) chain promotes the hydrolysis of glutamine to ammonia, which is used by the large (or ammonia) chain to synthesize carbamoyl phosphate. Tetramer of heterodimers (alpha,beta)4. Mg(2+) serves as cofactor. Requires Mn(2+) as cofactor.

It carries out the reaction hydrogencarbonate + L-glutamine + 2 ATP + H2O = carbamoyl phosphate + L-glutamate + 2 ADP + phosphate + 2 H(+). The catalysed reaction is hydrogencarbonate + NH4(+) + 2 ATP = carbamoyl phosphate + 2 ADP + phosphate + 2 H(+). It functions in the pathway amino-acid biosynthesis; L-arginine biosynthesis; carbamoyl phosphate from bicarbonate: step 1/1. The protein operates within pyrimidine metabolism; UMP biosynthesis via de novo pathway; (S)-dihydroorotate from bicarbonate: step 1/3. In terms of biological role, large subunit of the glutamine-dependent carbamoyl phosphate synthetase (CPSase). CPSase catalyzes the formation of carbamoyl phosphate from the ammonia moiety of glutamine, carbonate, and phosphate donated by ATP, constituting the first step of 2 biosynthetic pathways, one leading to arginine and/or urea and the other to pyrimidine nucleotides. The large subunit (synthetase) binds the substrates ammonia (free or transferred from glutamine from the small subunit), hydrogencarbonate and ATP and carries out an ATP-coupled ligase reaction, activating hydrogencarbonate by forming carboxy phosphate which reacts with ammonia to form carbamoyl phosphate. The chain is Carbamoyl phosphate synthase large chain from Sulfolobus acidocaldarius (strain ATCC 33909 / DSM 639 / JCM 8929 / NBRC 15157 / NCIMB 11770).